A 139-amino-acid polypeptide reads, in one-letter code: Large ribosomal subunit protein uL16 (139 aa).

This sequence belongs to the universal ribosomal protein uL16 family. As to quaternary structure, part of the 50S ribosomal subunit.

Binds 23S rRNA and is also seen to make contacts with the A and possibly P site tRNAs. The sequence is that of Large ribosomal subunit protein uL16 from Treponema pallidum (strain Nichols).